The chain runs to 202 residues: Type II restriction enzyme MunI (202 aa).

In terms of assembly, homodimer.

It catalyses the reaction Endonucleolytic cleavage of DNA to give specific double-stranded fragments with terminal 5'-phosphates.. Functionally, a P subtype restriction enzyme that recognizes the double-stranded sequence 5'-CAATTG-3' and cleaves after C-1. This Mycoplasma sp protein is Type II restriction enzyme MunI.